The following is a 324-amino-acid chain: Acetyl-coenzyme A carboxylase carboxyl transferase subunit alpha (324 aa).

Positions 44 to 298 (RFQDKLTKLQ…RKELIKQLNI (255 aa)) constitute a CoA carboxyltransferase C-terminal domain.

Belongs to the AccA family. Acetyl-CoA carboxylase is a heterohexamer composed of biotin carboxyl carrier protein (accB), biotin carboxylase (accC) and two subunits each of ACCase subunit alpha (accA) and ACCase subunit beta (accD).

Its subcellular location is the plastid. It localises to the chloroplast. It catalyses the reaction N(6)-carboxybiotinyl-L-lysyl-[protein] + acetyl-CoA = N(6)-biotinyl-L-lysyl-[protein] + malonyl-CoA. Its pathway is lipid metabolism; malonyl-CoA biosynthesis; malonyl-CoA from acetyl-CoA: step 1/1. In terms of biological role, component of the acetyl coenzyme A carboxylase (ACC) complex. First, biotin carboxylase catalyzes the carboxylation of biotin on its carrier protein (BCCP) and then the CO(2) group is transferred by the carboxyltransferase to acetyl-CoA to form malonyl-CoA. The sequence is that of Acetyl-coenzyme A carboxylase carboxyl transferase subunit alpha from Porphyra purpurea (Red seaweed).